We begin with the raw amino-acid sequence, 89 residues long: Small ribosomal subunit protein uS17 (89 aa).

It belongs to the universal ribosomal protein uS17 family. In terms of assembly, part of the 30S ribosomal subunit.

Its function is as follows. One of the primary rRNA binding proteins, it binds specifically to the 5'-end of 16S ribosomal RNA. The protein is Small ribosomal subunit protein uS17 of Acidovorax ebreus (strain TPSY) (Diaphorobacter sp. (strain TPSY)).